Here is a 93-residue protein sequence, read N- to C-terminus: Small ribosomal subunit protein uS15 (93 aa).

The protein belongs to the universal ribosomal protein uS15 family. As to quaternary structure, part of the 30S ribosomal subunit. Forms a bridge to the 50S subunit in the 70S ribosome, contacting the 23S rRNA.

Its function is as follows. One of the primary rRNA binding proteins, it binds directly to 16S rRNA where it helps nucleate assembly of the platform of the 30S subunit by binding and bridging several RNA helices of the 16S rRNA. Functionally, forms an intersubunit bridge (bridge B4) with the 23S rRNA of the 50S subunit in the ribosome. In Ehrlichia chaffeensis (strain ATCC CRL-10679 / Arkansas), this protein is Small ribosomal subunit protein uS15.